The primary structure comprises 306 residues: Acetyl-coenzyme A carboxylase carboxyl transferase subunit beta (306 aa).

Residues 27-296 form the CoA carboxyltransferase N-terminal domain; that stretch reads LWHKCPSCDA…PRFVAPVIEP (270 aa). Residues cysteine 31, cysteine 34, cysteine 50, and cysteine 53 each contribute to the Zn(2+) site. A C4-type zinc finger spans residues 31–53; sequence CPSCDAVLYRPELEKTLDVCPKC.

It belongs to the AccD/PCCB family. Acetyl-CoA carboxylase is a heterohexamer composed of biotin carboxyl carrier protein (AccB), biotin carboxylase (AccC) and two subunits each of ACCase subunit alpha (AccA) and ACCase subunit beta (AccD). The cofactor is Zn(2+).

The protein localises to the cytoplasm. The catalysed reaction is N(6)-carboxybiotinyl-L-lysyl-[protein] + acetyl-CoA = N(6)-biotinyl-L-lysyl-[protein] + malonyl-CoA. It participates in lipid metabolism; malonyl-CoA biosynthesis; malonyl-CoA from acetyl-CoA: step 1/1. In terms of biological role, component of the acetyl coenzyme A carboxylase (ACC) complex. Biotin carboxylase (BC) catalyzes the carboxylation of biotin on its carrier protein (BCCP) and then the CO(2) group is transferred by the transcarboxylase to acetyl-CoA to form malonyl-CoA. This Pseudomonas syringae pv. tomato (strain ATCC BAA-871 / DC3000) protein is Acetyl-coenzyme A carboxylase carboxyl transferase subunit beta.